The following is a 644-amino-acid chain: Translation factor guf1, mitochondrial (644 aa).

The N-terminal 31 residues, 1–31 (MTLRRFSYTFQARILRGLQARPVFVLPSRSH), are a transit peptide targeting the mitochondrion. A tr-type G domain is found at 51 to 232 (VNIRNWAIIS…AIIQRVPHPI (182 aa)). GTP is bound by residues 60–67 (SHIDHGKS), 125–129 (DTPGH), and 179–182 (NKID).

This sequence belongs to the TRAFAC class translation factor GTPase superfamily. Classic translation factor GTPase family. LepA subfamily.

The protein resides in the mitochondrion inner membrane. It carries out the reaction GTP + H2O = GDP + phosphate + H(+). Promotes mitochondrial protein synthesis. May act as a fidelity factor of the translation reaction, by catalyzing a one-codon backward translocation of tRNAs on improperly translocated ribosomes. Binds to mitochondrial ribosomes in a GTP-dependent manner. The sequence is that of Translation factor guf1, mitochondrial (guf1) from Schizosaccharomyces japonicus (strain yFS275 / FY16936) (Fission yeast).